The sequence spans 475 residues: Early growth response protein 1-B (475 aa).

Disordered regions lie at residues 109 to 180 and 264 to 285; these read NVSS…TASI and PSRM…RPYA. Low complexity predominate over residues 111-140; it reads SSSSAPSSSPSSSSSSSSSSSSQSPPLSCS. The segment covering 170–179 has biased composition (polar residues); sequence QPFQNASTAS. 3 C2H2-type zinc fingers span residues 284–308, 314–336, and 342–364; these read YACP…IRIH, FQCR…IRTH, and FACD…TKIH. Residues 355-379 form a disordered region; sequence DERKRHTKIHLRQKDKKADKATPVS. Positions 359-369 are enriched in basic residues; sequence RHTKIHLRQKD.

The protein belongs to the EGR C2H2-type zinc-finger protein family.

The protein resides in the nucleus. It is found in the cytoplasm. In terms of biological role, transcriptional regulator. Recognizes and binds to the DNA sequence 5'-GCG(T/G)GGGCG-3'(EGR-site) in the promoter region of target genes. Binds double-stranded target DNA, irrespective of the cytosine methylation status. Regulates the transcription of numerous target genes, and thereby plays an important role in regulating the response to growth factors, DNA damage, and ischemia. Plays a role in the regulation of cell survival, proliferation and cell death. Mediates responses to ischemia and hypoxia; regulates the expression of proteins that are involved in inflammatory processes. Plays a role in regulating the expression of circadian clock genes. This chain is Early growth response protein 1-B (egr1-b), found in Xenopus laevis (African clawed frog).